A 281-amino-acid polypeptide reads, in one-letter code: Bifunctional protein FolD (281 aa).

163 to 165 (GRS) contributes to the NADP(+) binding site.

It belongs to the tetrahydrofolate dehydrogenase/cyclohydrolase family. As to quaternary structure, homodimer.

The enzyme catalyses (6R)-5,10-methylene-5,6,7,8-tetrahydrofolate + NADP(+) = (6R)-5,10-methenyltetrahydrofolate + NADPH. It catalyses the reaction (6R)-5,10-methenyltetrahydrofolate + H2O = (6R)-10-formyltetrahydrofolate + H(+). The protein operates within one-carbon metabolism; tetrahydrofolate interconversion. Functionally, catalyzes the oxidation of 5,10-methylenetetrahydrofolate to 5,10-methenyltetrahydrofolate and then the hydrolysis of 5,10-methenyltetrahydrofolate to 10-formyltetrahydrofolate. The chain is Bifunctional protein FolD from Leuconostoc mesenteroides subsp. mesenteroides (strain ATCC 8293 / DSM 20343 / BCRC 11652 / CCM 1803 / JCM 6124 / NCDO 523 / NBRC 100496 / NCIMB 8023 / NCTC 12954 / NRRL B-1118 / 37Y).